We begin with the raw amino-acid sequence, 209 residues long: Claudin-4 (209 aa).

At 1 to 9 (MASMGLQVM) the chain is on the cytoplasmic side. Positions 1–103 (MASMGLQVMG…GVLLSVVGGK (103 aa)) are interaction with EPHA2. The helical transmembrane segment at 10–30 (GIALAVLGWLGAILSCALPMW) threads the bilayer. Residues 31–81 (RVTAFIGSNIVTSQTIWEGLWMNCVVQSTGQMQCKVYDSLLALPQDLQAAR) lie on the Extracellular side of the membrane. An intrachain disulfide couples Cys-54 to Cys-64. A helical membrane pass occupies residues 82-102 (ALIVICIILAVFGVLLSVVGG). The Cytoplasmic segment spans residues 103 to 117 (KCTNCVDDESSKAKI). The chain crosses the membrane as a helical span at residues 118–138 (MIVAGVVFLLAGLLVMVPVSW). Residues 139–160 (TANNVIRDFYNPLVASGQKREM) are Extracellular-facing. A helical transmembrane segment spans residues 161–181 (GASLYVGWAAAGLLILGGALL). The Cytoplasmic portion of the chain corresponds to 182–209 (CFNCPPRNDKPYSAKYSAARSAPASNYV). At Tyr-208 the chain carries Phosphotyrosine; by EPHA2. The tract at residues 208–209 (YV) is interactions with TJP1, TJP2 and TJP3.

It belongs to the claudin family. As to quaternary structure, interacts with EPHA2; phosphorylates CLDN4 and may regulate tight junctions. Directly interacts with TJP1/ZO-1, TJP2/ZO-2 and TJP3/ZO-3. Interacts with CLDN1. Interacts with CLDN8. In terms of processing, phosphorylated. Phosphorylation by EPHA2 is stimulated by EFNA1 and alters interaction with TJP1.

It localises to the cell junction. The protein localises to the tight junction. It is found in the cell membrane. Its function is as follows. Channel-forming tight junction protein that mediates paracellular chloride transport in the kidney. Plays a critical role in the paracellular reabsorption of filtered chloride in the kidney collecting ducts. Claudins play a major role in tight junction-specific obliteration of the intercellular space, through calcium-independent cell-adhesion activity. This Bos taurus (Bovine) protein is Claudin-4 (CLDN4).